The following is an 834-amino-acid chain: MDPPKLTFISKRDTKKKDEVNKEQPTKNLKILDLFSNDEEFSNPTQEEPTNTLQEKLMNVDPLEFFSKGGLKEEQKKERDDHRDDYRDSRDRDRDYRDNGGRDRDRDYRDGGGGGGGRDRDRNRDRDRDRDRDYRDGGGGRDRYRDNDRYRDTDRYRDNDRRDGSGSGSSRRRDERRENSGRRDYRDNDRRDDRRDNGRYGRDNDNSGGGGSGKNSSDKKEEINPVSNNNDIHKDRIKRDTTQFSHKVFEQINNKRDREDPELRDIKVDYMGIKRDENRKKIKGEKGKFVFEWDSSEDTSSDYNTLYTKKLEIQPQFGHGNFGGYEKNNNNNGNHYNGNIYNNNNNNNNNNNNNNNINNNNNGSMIGGKQISELPDTHWSKKPLKSMTKRDWHIFKEDFNISTKGGIAPNPIRTWQESNLPREILEAIRQLGYEKPSPIQMQSIPISLTGRDILGIAETGSGKTCAFVIPMLIYISKQPRLTKDTEADGPYALVMAPTRELVQQIEKETRNFAQHFGFRVVSLVGGQSIEDQAYQVSKGCEIIIATPGRLNDCLEKRYLVLNQCNYIVLDEADMMIDLGFEPQVTSVLDAMPSSFLKSEDDEMAEKQESDRSHIYRTTILFSATMPPLVEKLSKKYLRRPCTITIGEAGKVVDRIRQTVIFVKSENDKKEHLTQLIKDGPPPPIIIFVNKKKHCDIIAPVLEECRVSYTILHSGRSQEQREAALEGFKKRKYEVLIATGVASRGIHVDGVTHVINFDIPKNIEDYTHRIGRTGRAGSAGLASSFITDKDVEIMYDLKQILTSTNNIVPIELLKHPSSQQKHGSSKDHNKSVIFK.

2 disordered regions span residues 1 to 245 (MDPP…TQFS) and 322 to 371 (FGGY…GKQI). Residues 10 to 25 (SKRDTKKKDEVNKEQP) are compositionally biased toward basic and acidic residues. The segment covering 42 to 54 (SNPTQEEPTNTLQ) has biased composition (polar residues). 4 stretches are compositionally biased toward basic and acidic residues: residues 70–110 (GLKE…DYRD), 117–164 (GRDR…RRDG), 171–205 (RRRD…RDND), and 231–245 (DIHK…TQFS). Low complexity predominate over residues 328–362 (NNNNNGNHYNGNIYNNNNNNNNNNNNNNNINNNNN). The short motif at 413–441 (RTWQESNLPREILEAIRQLGYEKPSPIQM) is the Q motif element. Residues 444 to 643 (IPISLTGRDI…KKYLRRPCTI (200 aa)) form the Helicase ATP-binding domain. Position 457–464 (457–464 (AETGSGKT)) interacts with ATP. The DEAD box signature appears at 570 to 573 (DEAD). Residues 654-815 (RIRQTVIFVK…IVPIELLKHP (162 aa)) form the Helicase C-terminal domain. Positions 813-834 (KHPSSQQKHGSSKDHNKSVIFK) are disordered. Positions 823–834 (SSKDHNKSVIFK) are enriched in basic and acidic residues.

This sequence belongs to the DEAD box helicase family. DDX23/PRP28 subfamily.

It localises to the cytoplasm. Its subcellular location is the nucleus. The enzyme catalyses ATP + H2O = ADP + phosphate + H(+). Functionally, probable ATP-dependent RNA helicase which may be involved in mRNA splicing. This is ATP-dependent RNA helicase ddx23 (helB2) from Dictyostelium discoideum (Social amoeba).